A 208-amino-acid polypeptide reads, in one-letter code: Uridine kinase (208 aa).

12-19 (GGSGGGKT) contributes to the ATP binding site.

This sequence belongs to the uridine kinase family.

It is found in the cytoplasm. It catalyses the reaction uridine + ATP = UMP + ADP + H(+). It carries out the reaction cytidine + ATP = CMP + ADP + H(+). It functions in the pathway pyrimidine metabolism; CTP biosynthesis via salvage pathway; CTP from cytidine: step 1/3. It participates in pyrimidine metabolism; UMP biosynthesis via salvage pathway; UMP from uridine: step 1/1. The chain is Uridine kinase from Streptococcus pyogenes serotype M3 (strain ATCC BAA-595 / MGAS315).